Here is a 557-residue protein sequence, read N- to C-terminus: Mercuric reductase (557 aa).

Positions 1 to 65 (MILLSIEGMT…AIEALGYIAK (65 aa)) constitute an HMA domain. Positions 11 and 14 each coordinate a metal cation. Ala106 and Ala126 together coordinate FAD. The cysteines at positions 133 and 138 are disulfide-linked. Residues Lys142, Ala207, Asp399, and Val407 each contribute to the FAD site. Hg(2+) contacts are provided by Cys554 and Cys555.

Belongs to the class-I pyridine nucleotide-disulfide oxidoreductase family. Homodimer. Requires FAD as cofactor.

The catalysed reaction is Hg + NADP(+) + H(+) = Hg(2+) + NADPH. Its function is as follows. Resistance to Hg(2+) in bacteria appears to be governed by a specialized system which includes mercuric reductase. MerA protein is responsible for volatilizing mercury as Hg(0). The polypeptide is Mercuric reductase (merA) (Shewanella putrefaciens (Pseudomonas putrefaciens)).